Here is a 290-residue protein sequence, read N- to C-terminus: Plasma membrane ascorbate-dependent reductase CYBRD1 (290 aa).

At Met-1–Arg-7 the chain is on the cytoplasmic side. A helical transmembrane segment spans residues Gly-8 to Leu-32. The 206-residue stretch at Ser-15–Thr-220 folds into the Cytochrome b561 domain. Residues His-33–Phe-47 are Extracellular-facing. Residues Asn-48–Tyr-69 traverse the membrane as a helical segment. Positions 50, 70, and 79 each coordinate heme b. At Arg-70–Ser-78 the chain is on the cytoplasmic side. L-ascorbate contacts are provided by Lys-79 and Lys-83. The helical transmembrane segment at Lys-79–Phe-105 threads the bilayer. Position 86 (His-86) interacts with heme b. Over Glu-106–Ser-118 the chain is Extracellular. His-108 is a Fe(3+) binding site. Residues His-115 to Ser-118 and His-120 each bind heme b. Residues Leu-119–Leu-144 form a helical membrane-spanning segment. The Cytoplasmic segment spans residues Pro-145 to Leu-151. Arg-152 serves as a coordination point for L-ascorbate. The helical transmembrane segment at Arg-152–Thr-179 threads the bilayer. Positions 159 and 180 each coordinate heme b. Over Glu-180–Glu-197 the chain is Extracellular. Residues Gly-198–Pro-222 form a helical membrane-spanning segment. Residues Gln-223–Met-290 lie on the Cytoplasmic side of the membrane. Lys-225 provides a ligand contact to heme b. At Ser-232 the chain carries Phosphoserine. Positions Ser-257 to Met-290 are disordered. Residues Ala-260 to Gly-272 are compositionally biased toward low complexity. Position 289 is a phosphothreonine (Thr-289).

In terms of assembly, homodimer. Heme b serves as cofactor. Highly expressed in the brush-border membrane of duodenal enterocytes (at protein level). Also expressed in liver and spleen.

The protein localises to the cell membrane. It localises to the apical cell membrane. The enzyme catalyses Fe(3+)(out) + L-ascorbate(in) = monodehydro-L-ascorbate radical(in) + Fe(2+)(out) + H(+). It carries out the reaction Cu(2+)(out) + L-ascorbate(in) = Cu(+)(out) + monodehydro-L-ascorbate radical(in) + H(+). The catalysed reaction is monodehydro-L-ascorbate radical(out) + L-ascorbate(in) = monodehydro-L-ascorbate radical(in) + L-ascorbate(out). In terms of biological role, plasma membrane reductase that uses cytoplasmic ascorbate as an electron donor to reduce extracellular Fe(3+) into Fe(2+). Probably functions in dietary iron absorption at the brush border of duodenal enterocytes by producing Fe(2+), the divalent form of iron that can be transported into enterocytes. It is also able to reduce extracellular monodehydro-L-ascorbate and may be involved in extracellular ascorbate regeneration by erythrocytes in blood. May also act as a ferrireductase in airway epithelial cells. May also function as a cupric transmembrane reductase. The polypeptide is Plasma membrane ascorbate-dependent reductase CYBRD1 (Mus musculus (Mouse)).